Reading from the N-terminus, the 253-residue chain is Small ribosomal subunit protein uS5 (253 aa).

The disordered stretch occupies residues 1-30; sequence MAESAPRGFGRGGRGGRGRGRGRRGAKRDE. Over residues 14 to 26 the composition is skewed to basic residues; the sequence is RGGRGRGRGRRGA. The 64-residue stretch at 75–138 folds into the S5 DRBM domain; it reads LNDEVMKVVP…IMGKLSIMPI (64 aa).

It belongs to the universal ribosomal protein uS5 family. As to quaternary structure, component of the small ribosomal subunit (SSU). Mature yeast ribosomes consist of a small (40S) and a large (60S) subunit. The 40S small subunit contains 1 molecule of ribosomal RNA (18S rRNA) and at least 33 different proteins. The large 60S subunit contains 3 rRNA molecules (25S, 5.8S and 5S rRNA) and at least 46 different proteins. Interacts with snoRNA U3. Interacts with MPP10. Component of the ribosomal small subunit (SSU) processome composed of at least 40 protein subunits and snoRNA U3.

Its subcellular location is the cytoplasm. In terms of biological role, component of the ribosome, a large ribonucleoprotein complex responsible for the synthesis of proteins in the cell. The small ribosomal subunit (SSU) binds messenger RNAs (mRNAs) and translates the encoded message by selecting cognate aminoacyl-transfer RNA (tRNA) molecules. The large subunit (LSU) contains the ribosomal catalytic site termed the peptidyl transferase center (PTC), which catalyzes the formation of peptide bonds, thereby polymerizing the amino acids delivered by tRNAs into a polypeptide chain. The nascent polypeptides leave the ribosome through a tunnel in the LSU and interact with protein factors that function in enzymatic processing, targeting, and the membrane insertion of nascent chains at the exit of the ribosomal tunnel. Plays a role in the assembly and function of the 40S ribosomal subunit. Mutations in this protein affects the control of translational fidelity. Involved in nucleolar processing of pre-18S ribosomal RNA and ribosome assembly. Component of the ribosome, a large ribonucleoprotein complex responsible for the synthesis of proteins in the cell. The small ribosomal subunit (SSU) binds messenger RNAs (mRNAs) and translates the encoded message by selecting cognate aminoacyl-transfer RNA (tRNA) molecules. The large subunit (LSU) contains the ribosomal catalytic site termed the peptidyl transferase center (PTC), which catalyzes the formation of peptide bonds, thereby polymerizing the amino acids delivered by tRNAs into a polypeptide chain. The nascent polypeptides leave the ribosome through a tunnel in the LSU and interact with protein factors that function in enzymatic processing, targeting, and the membrane insertion of nascent chains at the exit of the ribosomal tunnel. uS5 is important for the assembly and function of the 40S ribosomal subunit. Mutations in this protein affects the control of translational fidelity. Involved in nucleolar processing of pre-18S ribosomal RNA and ribosome assembly. This chain is Small ribosomal subunit protein uS5 (rps2), found in Schizosaccharomyces pombe (strain 972 / ATCC 24843) (Fission yeast).